The following is a 465-amino-acid chain: Sperm microtubule associated protein 2-like (465 aa).

Over residues 1 to 29 the composition is skewed to polar residues; it reads MENQEFLSSSAPSEVTDGQVSTEISTCSE. The segment at 1–140 is disordered; that stretch reads MENQEFLSSS…REAKETELLP (140 aa). Composition is skewed to basic and acidic residues over residues 40-70 and 114-137; these read LDTH…QDQR and KARE…KETE. THEG repeat units follow at residues 174–192, 214–233, 260–279, 297–316, 333–352, 373–392, 409–428, and 446–465; these read RKCF…PKKQ, GALK…PKEV, PALF…PNGF, SLRI…AKGT, STLS…PRIK, AAMI…SKSV, ATTH…PNKR, and AALK…PLTR.

The polypeptide is Sperm microtubule associated protein 2-like (Homo sapiens (Human)).